The chain runs to 666 residues: Calcium/calmodulin-dependent protein kinase type II subunit beta (666 aa).

Positions 14–272 (YQLYEDIGKG…AHEALKHPWV (259 aa)) constitute a Protein kinase domain. Phosphotyrosine is present on tyrosine 17. ATP-binding positions include 20–28 (IGKGAFSVV) and lysine 43. Aspartate 136 acts as the Proton acceptor in catalysis. Residues 283–292 (HRQETVECLK) are autoinhibitory domain. Threonine 287 carries the phosphothreonine; by autocatalysis modification. A calmodulin-binding region spans residues 291-301 (LKKFNARRKLK). Threonine 306 and threonine 307 each carry phosphothreonine; by autocatalysis. Residues 349–534 (ADGVKPQTNS…IPGPLPTPSR (186 aa)) are disordered. Positions 354–369 (PQTNSTKNSAAATSPK) are enriched in polar residues. A phosphoserine mark is found at serine 367, serine 394, and serine 397. Phosphothreonine occurs at positions 400 and 401. A compositionally biased stretch (pro residues) spans 432 to 447 (LPCPSPAPFSPLPAPS). Residues 479–491 (SPALLGPLSSPSP) show a composition bias toward low complexity. Pro residues predominate over residues 514–531 (PVGPPPCPSPTIPGPLPT).

This sequence belongs to the protein kinase superfamily. CAMK Ser/Thr protein kinase family. CaMK subfamily. In terms of assembly, CAMK2 is composed of 4 different chains: alpha (CAMK2A), beta (CAMK2B), gamma (CAMK2G), and delta (CAMK2D). The different isoforms assemble into homo- or heteromultimeric holoenzymes composed of 12 subunits with two hexameric rings stacked one on top of the other. Interacts with SYNGAP1 and CAMK2N2. Interacts with MPDZ. Interacts with FOXO3. Interacts (when in a kinase inactive state not associated with calmodulin) with ARC; leading to target ARC to inactive synapses. Interacts with CAMK2N1; this interaction requires CAMK2B activation by Ca(2+). Post-translationally, autophosphorylation of Thr-287 following activation by Ca(2+)/calmodulin. Phosphorylation of Thr-287 locks the kinase into an activated state. As to expression, widely expressed. Expressed in adult and fetal brain. Expression is slightly lower in fetal brain. Expressed in skeletal muscle.

It is found in the cytoplasm. Its subcellular location is the cytoskeleton. The protein localises to the microtubule organizing center. It localises to the centrosome. The protein resides in the sarcoplasmic reticulum membrane. It is found in the synapse. The catalysed reaction is L-seryl-[protein] + ATP = O-phospho-L-seryl-[protein] + ADP + H(+). It carries out the reaction L-threonyl-[protein] + ATP = O-phospho-L-threonyl-[protein] + ADP + H(+). Its activity is regulated as follows. Activated by Ca(2+)/calmodulin. Binding of calmodulin results in conformational change that relieves intrasteric autoinhibition and allows autophosphorylation of Thr-287 which turns the kinase in a constitutively active form and confers to the kinase a Ca(2+)-independent activity. Functionally, calcium/calmodulin-dependent protein kinase that functions autonomously after Ca(2+)/calmodulin-binding and autophosphorylation, and is involved in dendritic spine and synapse formation, neuronal plasticity and regulation of sarcoplasmic reticulum Ca(2+) transport in skeletal muscle. In neurons, plays an essential structural role in the reorganization of the actin cytoskeleton during plasticity by binding and bundling actin filaments in a kinase-independent manner. This structural function is required for correct targeting of CaMK2A, which acts downstream of NMDAR to promote dendritic spine and synapse formation and maintain synaptic plasticity which enables long-term potentiation (LTP) and hippocampus-dependent learning. In developing hippocampal neurons, promotes arborization of the dendritic tree and in mature neurons, promotes dendritic remodeling. Also regulates the migration of developing neurons. Participates in the modulation of skeletal muscle function in response to exercise. In slow-twitch muscles, is involved in regulation of sarcoplasmic reticulum (SR) Ca(2+) transport and in fast-twitch muscle participates in the control of Ca(2+) release from the SR through phosphorylation of triadin, a ryanodine receptor-coupling factor, and phospholamban (PLN/PLB), an endogenous inhibitor of SERCA2A/ATP2A2. In response to interferon-gamma (IFN-gamma) stimulation, catalyzes phosphorylation of STAT1, stimulating the JAK-STAT signaling pathway. Phosphorylates reticulophagy regulator RETREG1 at 'Ser-151' under endoplasmic reticulum stress conditions which enhances RETREG1 oligomerization and its membrane scission and reticulophagy activity. In Homo sapiens (Human), this protein is Calcium/calmodulin-dependent protein kinase type II subunit beta (CAMK2B).